Here is a 284-residue protein sequence, read N- to C-terminus: Ribosomal RNA small subunit methyltransferase A (284 aa).

S-adenosyl-L-methionine contacts are provided by His12, Leu14, Gly47, Glu68, Asp93, and Asn118.

It belongs to the class I-like SAM-binding methyltransferase superfamily. rRNA adenine N(6)-methyltransferase family. RsmA subfamily.

It is found in the cytoplasm. The catalysed reaction is adenosine(1518)/adenosine(1519) in 16S rRNA + 4 S-adenosyl-L-methionine = N(6)-dimethyladenosine(1518)/N(6)-dimethyladenosine(1519) in 16S rRNA + 4 S-adenosyl-L-homocysteine + 4 H(+). Specifically dimethylates two adjacent adenosines (A1518 and A1519) in the loop of a conserved hairpin near the 3'-end of 16S rRNA in the 30S particle. May play a critical role in biogenesis of 30S subunits. The polypeptide is Ribosomal RNA small subunit methyltransferase A (Synechocystis sp. (strain ATCC 27184 / PCC 6803 / Kazusa)).